We begin with the raw amino-acid sequence, 1119 residues long: SH3 and PX domain-containing protein 2A (1119 aa).

The 125-residue stretch at 4–128 folds into the PX domain; it reads RTVLDVKVVD…RFFETKPDDI (125 aa). 2 SH3 domains span residues 149-208 and 249-308; these read MVLE…SQSG and SREE…KLKD. 5 disordered regions span residues 388 to 429, 494 to 595, 641 to 815, 914 to 941, and 957 to 1004; these read SSAT…PPRR, APSS…SNPA, SSDD…HESV, NLRSMSNPSPPIPSKPPGGFSKPTAMLN, and RPQS…SSFT. The SH3 3 domain maps to 445 to 504; it reads TVEAEYYTIAEFQSSISDGISFRGGQKADVIEKNSGGWWYVQIGDTEGWAPSSYIDKRKK. Basic and acidic residues-rich tracts occupy residues 581–590 and 688–718; these read PKPEPRKFEI and GRAERHSSKLFSDESARNPKREPVMRKDVEI. Low complexity predominate over residues 779–802; that stretch reads TASVVSSEDSTSSRSTSDLSSVYS. Positions 806 to 815 are enriched in basic and acidic residues; the sequence is RGGESDHESV. The region spanning 812-871 is the SH3 4 domain; it reads HESVLFRTTDAYERAQESELSFPAGVEVEVLEKQESGWWFVRWGSDEGWVPTFYLEPIKH. One can recognise an SH3 5 domain in the interval 1058–1119; sequence NLREVYVSIA…VPSNYLERKK (62 aa).

Belongs to the SH3PXD2 family. In terms of processing, tyrosine phosphorylated.

Its subcellular location is the cytoplasm. It localises to the cell projection. It is found in the podosome. Its function is as follows. Adapter protein involved in invadopodia and podosome formation and extracellular matrix degradation. This is SH3 and PX domain-containing protein 2A (sh3pxd2a) from Danio rerio (Zebrafish).